A 138-amino-acid chain; its full sequence is Acidic phospholipase A2 inhibitor chain HPD-1I (138 aa).

The N-terminal stretch at 1 to 16 (MRTLWIVAVCLIGVEG) is a signal peptide. 7 disulfide bridges follow: Cys42/Cys131, Cys44/Cys60, Cys59/Cys111, Cys65/Cys138, Cys66/Cys104, Cys73/Cys97, and Cys91/Cys102.

As to quaternary structure, heterodimer of an acidic and a basic chain; non-covalently linked. The basic chain is toxic and has phospholipase A2 activity (chain HDP-1P (AC Q1RP79) or HDP-2P (AC Q1RP78)) and the acidic chain is non-toxic and functions as its inhibitor (chain HPD-1I). As to expression, expressed by the venom gland.

Its subcellular location is the secreted. Functionally, heterodimer: slightly affects neuromuscular transmission acting presynaptically. It has a low catalytic activity, a low anticoagulant activity and weakly inhibits ADP-induced platelet aggregation. Monomer: has no activity (neurotoxic, catalytic, anticoagulant and a ADP-induced platelet aggregation), but inhibits phospholipase A2. This Vipera nikolskii (Nikolsky's adder) protein is Acidic phospholipase A2 inhibitor chain HPD-1I.